Here is a 214-residue protein sequence, read N- to C-terminus: Putative AgrB-like protein 2 (214 aa).

Transmembrane regions (helical) follow at residues 41 to 61 (IISVLILGLVFNIALEALIFL), 83 to 103 (TLLGIIISICIGFLIKSSFFA), 109 to 129 (LVVFIGIVIFVFGYFIVFKFA), 154 to 174 (ILTIYLFIEVLSIILYYNSGW), and 179 to 199 (PVMLSIIFGVAWQCMTLTYIG).

The protein belongs to the AgrB family.

Its subcellular location is the cell membrane. Its function is as follows. May be involved in the proteolytic processing of a quorum sensing system signal molecule precursor. The polypeptide is Putative AgrB-like protein 2 (Clostridium perfringens (strain 13 / Type A)).